Reading from the N-terminus, the 302-residue chain is MAFSRESALDVAKVLSESLPYIQRFAGKTLVIKYGGNAMTDENLQAGFARDIVLMKAIGINPIVVHGGGPQIGDMLAKLNIESKFINGMRVTDTATMDVVEMVLGGQVNKEIVNLICEAGGKAIGITGKDSRFIKAKKLFVKHQAEGMTAPEQVDIGHVGEVASVDTSFLKFFENSDLIPVIAPIGVDDEGNSYNINADLVAGKVAEAVGAEKLMLLTNISGVQDKQGNVLTGLSTAQVDALIADGTIYGGMLPKISCALSAVNAGVTSAHIIDGRVPHATLLEIFTDTGVGTLISNTKVGE.

Substrate-binding positions include G68–G69, R90, and N195.

This sequence belongs to the acetylglutamate kinase family. ArgB subfamily.

The protein localises to the cytoplasm. The catalysed reaction is N-acetyl-L-glutamate + ATP = N-acetyl-L-glutamyl 5-phosphate + ADP. Its pathway is amino-acid biosynthesis; L-arginine biosynthesis; N(2)-acetyl-L-ornithine from L-glutamate: step 2/4. Functionally, catalyzes the ATP-dependent phosphorylation of N-acetyl-L-glutamate. This Marinomonas sp. (strain MWYL1) protein is Acetylglutamate kinase.